The primary structure comprises 377 residues: Nitric oxide reductase FlRd-NAD(+) reductase (377 aa).

Belongs to the FAD-dependent oxidoreductase family. Requires FAD as cofactor.

The protein localises to the cytoplasm. The catalysed reaction is 2 reduced [nitric oxide reductase rubredoxin domain] + NAD(+) + H(+) = 2 oxidized [nitric oxide reductase rubredoxin domain] + NADH. Its pathway is nitrogen metabolism; nitric oxide reduction. Functionally, one of at least two accessory proteins for anaerobic nitric oxide (NO) reductase. Reduces the rubredoxin moiety of NO reductase. The chain is Nitric oxide reductase FlRd-NAD(+) reductase from Salmonella newport (strain SL254).